Reading from the N-terminus, the 328-residue chain is Biotin synthase (328 aa).

One can recognise a Radical SAM core domain in the interval 41 to 260 (TAIETASLLS…VALARILMPA (220 aa)). 3 residues coordinate [4Fe-4S] cluster: Cys56, Cys60, and Cys63. [2Fe-2S] cluster-binding residues include Cys100, Cys131, Cys191, and Arg264.

The protein belongs to the radical SAM superfamily. Biotin synthase family. Homodimer. [4Fe-4S] cluster serves as cofactor. The cofactor is [2Fe-2S] cluster.

The catalysed reaction is (4R,5S)-dethiobiotin + (sulfur carrier)-SH + 2 reduced [2Fe-2S]-[ferredoxin] + 2 S-adenosyl-L-methionine = (sulfur carrier)-H + biotin + 2 5'-deoxyadenosine + 2 L-methionine + 2 oxidized [2Fe-2S]-[ferredoxin]. It participates in cofactor biosynthesis; biotin biosynthesis; biotin from 7,8-diaminononanoate: step 2/2. Catalyzes the conversion of dethiobiotin (DTB) to biotin by the insertion of a sulfur atom into dethiobiotin via a radical-based mechanism. In Cereibacter sphaeroides (strain ATCC 17023 / DSM 158 / JCM 6121 / CCUG 31486 / LMG 2827 / NBRC 12203 / NCIMB 8253 / ATH 2.4.1.) (Rhodobacter sphaeroides), this protein is Biotin synthase.